We begin with the raw amino-acid sequence, 123 residues long: Large ribosomal subunit protein bL12 (123 aa).

Belongs to the bacterial ribosomal protein bL12 family. Homodimer. Part of the ribosomal stalk of the 50S ribosomal subunit. Forms a multimeric L10(L12)X complex, where L10 forms an elongated spine to which 2 to 4 L12 dimers bind in a sequential fashion. Binds GTP-bound translation factors.

Its function is as follows. Forms part of the ribosomal stalk which helps the ribosome interact with GTP-bound translation factors. Is thus essential for accurate translation. The chain is Large ribosomal subunit protein bL12 from Neisseria meningitidis serogroup C (strain 053442).